The sequence spans 253 residues: Imidazole glycerol phosphate synthase subunit HisF (253 aa).

Residues Asp11 and Asp130 contribute to the active site.

This sequence belongs to the HisA/HisF family. As to quaternary structure, heterodimer of HisH and HisF.

It localises to the cytoplasm. It carries out the reaction 5-[(5-phospho-1-deoxy-D-ribulos-1-ylimino)methylamino]-1-(5-phospho-beta-D-ribosyl)imidazole-4-carboxamide + L-glutamine = D-erythro-1-(imidazol-4-yl)glycerol 3-phosphate + 5-amino-1-(5-phospho-beta-D-ribosyl)imidazole-4-carboxamide + L-glutamate + H(+). It functions in the pathway amino-acid biosynthesis; L-histidine biosynthesis; L-histidine from 5-phospho-alpha-D-ribose 1-diphosphate: step 5/9. IGPS catalyzes the conversion of PRFAR and glutamine to IGP, AICAR and glutamate. The HisF subunit catalyzes the cyclization activity that produces IGP and AICAR from PRFAR using the ammonia provided by the HisH subunit. This Geotalea daltonii (strain DSM 22248 / JCM 15807 / FRC-32) (Geobacter daltonii) protein is Imidazole glycerol phosphate synthase subunit HisF.